Reading from the N-terminus, the 230-residue chain is Ribonuclease 3 (230 aa).

Positions 7–134 constitute an RNase III domain; that stretch reads LEELESKLGI…VIAAIYLDKG (128 aa). E47 contacts Mg(2+). Residue D51 is part of the active site. Residues D120 and E123 each coordinate Mg(2+). E123 is a catalytic residue. Residues 161–230 form the DRBM domain; it reads DYKTRLQEIL…ACKALKGLDN (70 aa).

The protein belongs to the ribonuclease III family. As to quaternary structure, homodimer. The cofactor is Mg(2+).

It localises to the cytoplasm. It carries out the reaction Endonucleolytic cleavage to 5'-phosphomonoester.. Digests double-stranded RNA. Involved in the processing of primary rRNA transcript to yield the immediate precursors to the large and small rRNAs (23S and 16S). Processes some mRNAs, and tRNAs when they are encoded in the rRNA operon. Processes pre-crRNA and tracrRNA of type II CRISPR loci if present in the organism. The polypeptide is Ribonuclease 3 (Clostridium acetobutylicum (strain ATCC 824 / DSM 792 / JCM 1419 / IAM 19013 / LMG 5710 / NBRC 13948 / NRRL B-527 / VKM B-1787 / 2291 / W)).